Here is a 92-residue protein sequence, read N- to C-terminus: Ictacalcin (92 aa).

2 consecutive EF-hand domains span residues 12–47 (ISTF…AFGN) and 49–84 (SDQA…TTML). Ca(2+) is bound by residues threonine 27, glutamate 32, aspartate 62, asparagine 64, aspartate 66, and glutamate 73.

The protein belongs to the S-100 family. Abundant in epithelial cells of olfactory rosette, barbel, skin and gill but not brain or muscle.

Plays an important role in catfish calcium homeostasis. The polypeptide is Ictacalcin (Ictalurus punctatus (Channel catfish)).